Consider the following 305-residue polypeptide: Divergent heme oxygenase-like protein (305 aa).

Positions 1–18 (MIRKIIILMFTFFSNIHN) are cleaved as a signal peptide. The interval 1-83 (MIRKIIILMF…GVDKNNINYN (83 aa)) is sufficient for apicoplast targeting. N-linked (GlcNAc...) asparagine glycans are attached at residues N132, N159, and N288.

In terms of processing, proteolytically cleaved; targeted by its N-terminal leader sequence for import into the apicoplast where it undergoes proteolytic processing, resulting in an N-terminus starting at or near Gly-33 in the mature protein.

It localises to the plastid. The protein localises to the apicoplast. Functionally, essential for blood-stage parasite viability. Required for apicoplast biogenesis. Associates with the apicoplast genome and mediates apicoplast gene expression. Can bind heme. Can bind protoporphyrin IX. This Plasmodium falciparum (isolate 3D7) protein is Divergent heme oxygenase-like protein.